The sequence spans 157 residues: Endoribonuclease YbeY (157 aa).

Zn(2+) is bound by residues H123, H127, and H133.

It belongs to the endoribonuclease YbeY family. The cofactor is Zn(2+).

The protein resides in the cytoplasm. Its function is as follows. Single strand-specific metallo-endoribonuclease involved in late-stage 70S ribosome quality control and in maturation of the 3' terminus of the 16S rRNA. This Limosilactobacillus fermentum (strain NBRC 3956 / LMG 18251) (Lactobacillus fermentum) protein is Endoribonuclease YbeY.